The following is a 339-amino-acid chain: MRVLRVTFLWALLLLVAFSASVYAAEDEPKTPESTSSANPRDNDPVIQEIRGLRNSGMKLNDAKDFKGAIAKLRGAITLLHDRVFGEGREAITDPSDISQDAALYAQILNDYGTVLIRAKQYDEAIEVLEDSVAMVEKIYGDSHPSLGLSLRSLADAYMAKEEYKMAIKKYKTLRKHVKKGLETTHEAYIEASLRIAEGYKKLGNTKKNLKVLKDAVEAQNGEINGLTTGIAELYMELSTAHVAVGEIDDALRAAEVASAIFRQRDGEDTLSFAFSLNALAGVKMRQKKVDEAIKLLEQAHRIAVQIYGEKDPITQASAKTLREVKEYKLDLQAQKDEL.

Positions 1–24 are cleaved as a signal peptide; it reads MRVLRVTFLWALLLLVAFSASVYA. A RxLR-dEER motif is present at residues 51–74; that stretch reads RGLRNSGMKLNDAKDFKGAIAKLR. TPR repeat units lie at residues 106 to 139, 190 to 223, 232 to 265, and 274 to 307; these read AQIL…VEKI, IEAS…QNGE, AELY…FRQR, and AFSL…AVQI.

Belongs to the RxLR effector family.

Its subcellular location is the secreted. It is found in the host nucleus. The protein localises to the host cytoplasm. Functionally, effector that suppresses flg22-induced post-translational MAP kinase activation in tomato but not in Arabidopsis. The perception of highly conserved pathogen- or microbe-associated molecular patterns (PAMPs/MAMPs), such as flg22, triggers converging signaling pathways recruiting MAP kinase cascades and inducing transcriptional re-programming, yielding a generic antimicrobial response. In Phytophthora infestans (strain T30-4) (Potato late blight agent), this protein is RxLR effector protein SFI4.